A 314-amino-acid chain; its full sequence is Lysophospholipase D GDPD1 (314 aa).

Over 1 to 3 (MSS) the chain is Extracellular. A helical membrane pass occupies residues 4 to 24 (TAAFCLLSTLGGYLVTSFLLL). Residues 25–195 (KYPALLHQRK…VDKCYKENSD (171 aa)) lie on the Cytoplasmic side of the membrane. Positions 40-309 (SRHISHRGGA…DYPTKLKEFL (270 aa)) constitute a GP-PDE domain. Residues Glu-72, Asp-74, and His-87 each contribute to the a divalent metal cation site. Residues 196–216 (IPILFSLQRVLLILGLFFTGL) form a helical membrane-spanning segment. The Extracellular segment spans residues 217 to 314 (LPFVPIREQF…LKEFLNNMSA (98 aa)).

Belongs to the glycerophosphoryl diester phosphodiesterase family.

The protein localises to the cytoplasm. The protein resides in the membrane. It is found in the perinuclear region. It localises to the endoplasmic reticulum. It catalyses the reaction a 1-O-alkyl-sn-glycero-3-phosphocholine + H2O = a 1-O-alkyl-sn-glycero-3-phosphate + choline + H(+). The catalysed reaction is 1-hexadecanoyl-sn-glycero-3-phosphocholine + H2O = 1-hexadecanoyl-sn-glycero-3-phosphate + choline + H(+). The enzyme catalyses 1-hexadecanoyl-sn-glycero-3-phosphoethanolamine + H2O = 1-hexadecanoyl-sn-glycero-3-phosphate + ethanolamine + H(+). It carries out the reaction N-hexadecanoyl-sn-glycero-3-phosphoethanolamine + H2O = N-hexadecanoylethanolamine + sn-glycerol 3-phosphate + H(+). It catalyses the reaction N-(5Z,8Z,11Z,14Z-eicosatetraenoyl)-1-(9Z-octadecenoyl)-sn-glycero-3-phosphoethanolamine + H2O = N-(5Z,8Z,11Z,14Z-eicosatetraenoyl)-ethanolamine + 1-(9Z-octadecenoyl)-sn-glycero-3-phosphate + H(+). The catalysed reaction is N,1-di-(9Z-octadecenoyl)-sn-glycero-3-phosphoethanolamine + H2O = N-(9Z-octadecenoyl) ethanolamine + 1-(9Z-octadecenoyl)-sn-glycero-3-phosphate + H(+). The enzyme catalyses N-hexadecanoyl-1-(9Z-octadecenoyl)-sn-glycero-3-phosphoethanolamine + H2O = N-hexadecanoylethanolamine + 1-(9Z-octadecenoyl)-sn-glycero-3-phosphate + H(+). It carries out the reaction 1-O-hexadecyl-sn-glycero-3-phosphocholine + H2O = 1-O-hexadecyl-sn-glycero-3-phosphate + choline + H(+). It catalyses the reaction 1-(9Z-octadecenoyl)-sn-glycero-3-phosphocholine + H2O = 1-(9Z-octadecenoyl)-sn-glycero-3-phosphate + choline + H(+). The catalysed reaction is N,1-dihexadecanoyl-sn-glycero-3-phosphoethanolamine + H2O = N-hexadecanoylethanolamine + 1-hexadecanoyl-sn-glycero-3-phosphate + H(+). The enzyme catalyses 1-O-(1Z-octadecenyl)-sn-glycero-3-phospho-(N-5Z,8Z,11Z,14Z-eicosatetraenoyl)-ethanolamine + H2O = 1-O-(1Z-octadecenyl)-sn-glycero-3-phosphate + N-(5Z,8Z,11Z,14Z-eicosatetraenoyl)-ethanolamine + H(+). It carries out the reaction 1-O-(1Z-octadecenyl)-sn-glycero-3-phospho-(N-9Z-octadecenoyl)-ethanolamine + H2O = 1-O-(1Z-octadecenyl)-sn-glycero-3-phosphate + N-(9Z-octadecenoyl) ethanolamine + H(+). It catalyses the reaction 1-O-(1Z-octadecenyl)-sn-glycero-3-phospho-N-hexadecanoyl-ethanolamine + H2O = 1-O-(1Z-octadecenyl)-sn-glycero-3-phosphate + N-hexadecanoylethanolamine + H(+). With respect to regulation, lysophospholipase D activity is increased by magnesium and manganese and inhibited by calcium in a concentration dependent manner. Loss of lysophospholipase D activity by addition of EDTA. Its function is as follows. Hydrolyzes lysoglycerophospholipids to produce lysophosphatidic acid (LPA) and the corresponding amines. Shows a preference for 1-O-alkyl-sn-glycero-3-phosphocholine (lyso-PAF), lysophosphatidylethanolamine (lyso-PE) and lysophosphatidylcholine (lyso-PC). May be involved in bioactive N-acylethanolamine biosynthesis from both N-acyl-lysoplasmenylethanolamin (N-acyl-lysoPlsEt) and N-acyl-lysophosphatidylethanolamin (N-acyl-lysoPE). In addition, hydrolyzes glycerophospho-N-acylethanolamine to N-acylethanolamine. Does not display glycerophosphodiester phosphodiesterase activity, since it cannot hydrolyze either glycerophosphoinositol or glycerophosphocholine. This chain is Lysophospholipase D GDPD1, found in Rattus norvegicus (Rat).